Reading from the N-terminus, the 73-residue chain is uncharacterized protein (73 aa).

This is an uncharacterized protein from Autographa californica nuclear polyhedrosis virus (AcMNPV).